The chain runs to 1860 residues: Golgi-specific brefeldin A-resistance guanine nucleotide exchange factor 1 (1860 aa).

Positions 1–211 (MVDKNIYIIQ…EPKNYVGTNM (211 aa)) are DCB; DCB:DCB domain and DCB:HUS domain interaction. The interval 1-381 (MVDKNIYIIQ…SVHDMDYVNP (381 aa)) is interaction with RAB1B. Disordered stretches follow at residues 215–266 (KMRA…GGMP) and 281–372 (AASA…DSAS). A compositionally biased stretch (basic residues) spans 227 to 241 (WKKQKRSPRPPRHMT). Composition is skewed to polar residues over residues 250–262 (PTPNGTTLSSNLT), 290–301 (TDSGLEFSSQTT), and 335–351 (DLQQEGTHVEKSQSASV). Residues Ser-350 and Ser-353 each carry the phosphoserine modification. Thr-508 carries the post-translational modification Phosphothreonine. The tract at residues 531 to 551 (RIPSFVTELYINYDCDYYCSN) is HUS; DCB:HUS domain interaction. Over residues 620 to 631 (TREASNTERTAS) the composition is skewed to basic and acidic residues. A disordered region spans residues 620-666 (TREASNTERTASDGKAVGMASDIPGLHLPGGGRLPPEHGKSGCSDLE). Ser-663 bears the Phosphoserine mark. The region spanning 693–883 (ELIEIKNKKK…EDMYHAIKNE (191 aa)) is the SEC7 domain. The segment at 887–1371 (MPEEQTGLVR…PSRPGPSPLI (485 aa)) is phosphatidylinositol-phosphate binding; required for translocation to the leading edge and for ARF1 activation upon GPCR signaling. Residues 1285–1297 (QATARADAPDAGA) show a composition bias toward low complexity. The tract at residues 1285-1336 (QATARADAPDAGAQSDSELPSYHQNDVSLDRGYTSDSEVYTDHGRPGKIHRS) is disordered. Over residues 1298-1311 (QSDSELPSYHQNDV) the composition is skewed to polar residues. Ser-1299 carries the phosphoserine modification. Position 1317 is a phosphotyrosine (Tyr-1317). Residues Ser-1319, Ser-1321, and Ser-1336 each carry the phosphoserine modification. Phosphothreonine; by AMPK is present on Thr-1338. Disordered regions lie at residues 1351-1371 (GKDDVDNSKPGPSRPGPSPLI), 1431-1484 (CKSQ…DEGV), and 1726-1809 (PMPM…QPPL). Basic and acidic residues predominate over residues 1433–1447 (SQEKRGKSHKYDSKG). Polar residues predominate over residues 1465 to 1474 (TSSQHASRGG). Phosphoserine occurs at positions 1476, 1774, and 1785. Residues 1775–1792 (PRAASSSSPGSPVASSPS) are compositionally biased toward low complexity.

In terms of assembly, can form homodimers and probably homotetramers. Interacts with COPG1; the interaction is independent of ARF1 activation. Interacts with ARF1, ARF3, ARF4 and ARF5. Interacts with RAB1B (GTP-bound form); required for GBF1 membrane association. Interacts with GGA1, GGA2 and GGA3. Interacts with USO1. Interacts (via SEC7 domain) with PNPLA2 (via C-terminus); the interaction is direct. Interacts with ARMH3. (Microbial infection) Interacts with poliovirus protein 3A. In terms of processing, AMPK-mediated phosphorylation at Thr-1338 is induced by 2-deoxyglucose (2-DG) and AICA ribonucleotide, and occurs during mitosis leading to membrane disassociation and inactivation of ARF1 during mitosis. As to expression, ubiquitous.

It is found in the golgi apparatus. It localises to the cis-Golgi network. The protein resides in the endoplasmic reticulum-Golgi intermediate compartment. The protein localises to the trans-Golgi network. Its subcellular location is the cytoplasm. It is found in the lipid droplet. It localises to the membrane. With respect to regulation, inhibited by brefeldin A (BFA). Inhibited by golgicide A (GCA). Functionally, guanine-nucleotide exchange factor (GEF) for members of the Arf family of small GTPases involved in trafficking in the early secretory pathway; its GEF activity initiates the coating of nascent vesicles via the localized generation of activated ARFs through replacement of GDP with GTP. Recruitment to cis-Golgi membranes requires membrane association of Arf-GDP and can be regulated by ARF1, ARF3, ARF4 and ARF5. Involved in the recruitment of the COPI coat complex to the endoplasmic reticulum exit sites (ERES), and the endoplasmic reticulum-Golgi intermediate (ERGIC) and cis-Golgi compartments which implicates ARF1 activation. Involved in COPI vesicle-dependent retrograde transport from the ERGIC and cis-Golgi compartments to the endoplasmic reticulum (ER). Involved in the trans-Golgi network recruitment of GGA1, GGA2, GGA3, BIG1, BIG2, and the AP-1 adaptor protein complex related to chlathrin-dependent transport; the function requires its GEF activity (probably at least in part on ARF4 and ARF5). Has GEF activity towards ARF1. Has in vitro GEF activity towards ARF5. Involved in the processing of PSAP. Required for the assembly of the Golgi apparatus. The AMPK-phosphorylated form is involved in Golgi disassembly during mitotis and under stress conditions. May be involved in the COPI vesicle-dependent recruitment of PNPLA2 to lipid droplets; however, this function is under debate. In neutrophils, involved in G protein-coupled receptor (GPCR)-mediated chemotaxis und superoxide production. Proposed to be recruited by phosphatidylinositol-phosphates generated upon GPCR stimulation to the leading edge where it recruits and activates ARF1, and is involved in recruitment of GIT2 and the NADPH oxidase complex. Plays a role in maintaining mitochondrial morphology. In Homo sapiens (Human), this protein is Golgi-specific brefeldin A-resistance guanine nucleotide exchange factor 1 (GBF1).